Here is a 330-residue protein sequence, read N- to C-terminus: Zinc finger protein Gfi-1b (330 aa).

Residues 1 to 20 are SNAG domain; that stretch reads MPRSFLVKSKKAHTYHQPRV. Residues 1 to 42 form a disordered region; sequence MPRSFLVKSKKAHTYHQPRVQEDEPLWPPALTPVPRDQAPSN. Residue K8 is modified to N6,N6-dimethyllysine. An interaction with ARIH2 region spans residues 91–330; it reads GDSPLSDSPP…RHRESQHNLK (240 aa). C2H2-type zinc fingers lie at residues 163–186, 192–214, 220–242, 248–270, 276–298, and 304–327; these read YHCV…RRSH, FACD…THVH, FECR…LLIH, YPCQ…TYIH, HKCQ…SRKH, and FSCE…ESQH. The segment at 164–330 is mediates interaction with GATA1; the sequence is HCVKCNKVFS…RHRESQHNLK (167 aa).

Component of a RCOR-GFI-KDM1A-HDAC complex. Interacts directly with RCOR1, KDM1A and HDAC2. Forms a complex with GATA1. Interacts with histone methyltransferases EHMT2 and SUV39H1. Interacts with ARIH2 (via RING-type 2). Interacts with RUNX1T1. In terms of processing, methylation at Lys-8 in the SNAG domain seems required for the recruitment of the corepressor complex. Expressed in bone marrow and fetal liver, but also detectable in fetal spleen, fetal thymus, and testes. Detected in hematopoietic stem cells, erythroblasts, and megakaryocytes. Overexpressed in bone marrow of patients with erythroleukemia and megakaryocytic leukemia as well as in their corresponding leukemic cell lines, and markedly repressed in severe aplastic anemia (SAA).

It is found in the nucleus. Functionally, essential proto-oncogenic transcriptional regulator necessary for development and differentiation of erythroid and megakaryocytic lineages. Component of a RCOR-GFI-KDM1A-HDAC complex that suppresses, via histone deacetylase (HDAC) recruitment, a number of genes implicated in multilineage blood cell development and controls hematopoietic differentiation. Transcriptional repressor or activator depending on both promoter and cell type context; represses promoter activity of SOCS1 and SOCS3 and thus, may regulate cytokine signaling pathways. Cooperates with GATA1 to repress target gene transcription, such as the apoptosis regulator BCL2L1; GFI1B silencing in leukemic cell lines markedly increase apoptosis rate. Inhibits down-regulation of MYC and MYB as well as the cyclin-dependent kinase inhibitor CDKN1A/P21WAF1 in IL6-treated myelomonocytic cells. Represses expression of GATA3 in T-cell lymphomas and inhibits GATA1-mediated transcription; as GATA1 also mediates erythroid GFI1B transcription, both GATA1 and GFI1B participate in a feedback regulatory pathway controlling the expression of GFI1B gene in erythroid cells. Suppresses GATA1-mediated stimulation of GFI1B promoter through protein interaction. Binds to gamma-satellite DNA and to its own promoter, auto-repressing its own expression. Alters histone methylation by recruiting histone methyltransferase to target genes promoters. Plays a role in heterochromatin formation. In Homo sapiens (Human), this protein is Zinc finger protein Gfi-1b (GFI1B).